The primary structure comprises 1000 residues: uncharacterized protein (1000 aa).

The segment covering 787–809 (RQYEKLKRQRAKSETERHQERHG) has biased composition (basic and acidic residues). The interval 787 to 812 (RQYEKLKRQRAKSETERHQERHGKLS) is disordered.

This is an uncharacterized protein from Picosynechococcus sp. (strain ATCC 27264 / PCC 7002 / PR-6) (Agmenellum quadruplicatum).